A 232-amino-acid chain; its full sequence is Phosphatidylserine decarboxylase proenzyme (232 aa).

The active-site Schiff-base intermediate with substrate; via pyruvic acid is the S190. S190 is subject to Pyruvic acid (Ser); by autocatalysis.

It belongs to the phosphatidylserine decarboxylase family. PSD-A subfamily. Heterodimer of a large membrane-associated beta subunit and a small pyruvoyl-containing alpha subunit. The cofactor is pyruvate. Is synthesized initially as an inactive proenzyme. Formation of the active enzyme involves a self-maturation process in which the active site pyruvoyl group is generated from an internal serine residue via an autocatalytic post-translational modification. Two non-identical subunits are generated from the proenzyme in this reaction, and the pyruvate is formed at the N-terminus of the alpha chain, which is derived from the carboxyl end of the proenzyme. The post-translation cleavage follows an unusual pathway, termed non-hydrolytic serinolysis, in which the side chain hydroxyl group of the serine supplies its oxygen atom to form the C-terminus of the beta chain, while the remainder of the serine residue undergoes an oxidative deamination to produce ammonia and the pyruvoyl prosthetic group on the alpha chain.

The protein resides in the cell membrane. It carries out the reaction a 1,2-diacyl-sn-glycero-3-phospho-L-serine + H(+) = a 1,2-diacyl-sn-glycero-3-phosphoethanolamine + CO2. It functions in the pathway phospholipid metabolism; phosphatidylethanolamine biosynthesis; phosphatidylethanolamine from CDP-diacylglycerol: step 2/2. Functionally, catalyzes the formation of phosphatidylethanolamine (PtdEtn) from phosphatidylserine (PtdSer). This is Phosphatidylserine decarboxylase proenzyme from Rhizobium rhizogenes (strain K84 / ATCC BAA-868) (Agrobacterium radiobacter).